The following is a 563-amino-acid chain: Probable ganciclovir kinase (563 aa).

Polar residues predominate over residues 1–16; the sequence is MDNGVETPQGQKTQPI. Positions 1–33 are disordered; it reads MDNGVETPQGQKTQPINLPPDRKRLRKHDGLGK. ATP is bound by residues 202–210 and K219; that span reads LGVGAYGKV. Catalysis depends on D314, which acts as the Proton acceptor.

It belongs to the protein kinase superfamily. Tyr protein kinase family. HCMV ganciclovir subfamily.

Phosphorylates the antiviral nucleoside analog ganciclovir. This Human herpesvirus 6B (strain Z29) (HHV-6 variant B) protein is Probable ganciclovir kinase (U69).